A 516-amino-acid polypeptide reads, in one-letter code: 2-isopropylmalate synthase (516 aa).

The region spanning 10-271 (IRIFDTTLRD…TTGIDTRELA (262 aa)) is the Pyruvate carboxyltransferase domain. D19, H205, H207, and N241 together coordinate Mn(2+). The regulatory domain stretch occupies residues 396-516 (ELVSFRVEAG…REKASNRETP (121 aa)).

Belongs to the alpha-IPM synthase/homocitrate synthase family. LeuA type 1 subfamily. Homodimer. Mn(2+) serves as cofactor.

The protein resides in the cytoplasm. It catalyses the reaction 3-methyl-2-oxobutanoate + acetyl-CoA + H2O = (2S)-2-isopropylmalate + CoA + H(+). It participates in amino-acid biosynthesis; L-leucine biosynthesis; L-leucine from 3-methyl-2-oxobutanoate: step 1/4. Functionally, catalyzes the condensation of the acetyl group of acetyl-CoA with 3-methyl-2-oxobutanoate (2-ketoisovalerate) to form 3-carboxy-3-hydroxy-4-methylpentanoate (2-isopropylmalate). This Acidimicrobium ferrooxidans (strain DSM 10331 / JCM 15462 / NBRC 103882 / ICP) protein is 2-isopropylmalate synthase.